Here is a 451-residue protein sequence, read N- to C-terminus: Tubulin alpha chain (451 aa).

Residues 1 to 4 carry the MREC motif motif; that stretch reads MREC. Gln-11 provides a ligand contact to GTP. The residue at position 40 (Lys-40) is an N6-acetyllysine. GTP is bound by residues Glu-71, Ser-140, Gly-144, Thr-145, Thr-179, Asn-206, and Asn-228. Glu-71 contributes to the Mg(2+) binding site. Residue Glu-254 is part of the active site. A disordered region spans residues 432 to 451; the sequence is YEEVGVDSVEGEGEEEGEEY. At Glu-445 the chain carries 5-glutamyl polyglutamate.

The protein belongs to the tubulin family. In terms of assembly, dimer of alpha and beta chains. A typical microtubule is a hollow water-filled tube with an outer diameter of 25 nm and an inner diameter of 15 nM. Alpha-beta heterodimers associate head-to-tail to form protofilaments running lengthwise along the microtubule wall with the beta-tubulin subunit facing the microtubule plus end conferring a structural polarity. Microtubules usually have 13 protofilaments but different protofilament numbers can be found in some organisms and specialized cells. Mg(2+) is required as a cofactor. Post-translationally, some glutamate residues at the C-terminus are polyglycylated, resulting in polyglycine chains on the gamma-carboxyl group. Glycylation is mainly limited to tubulin incorporated into axonemes (cilia and flagella) whereas glutamylation is prevalent in neuronal cells, centrioles, axonemes, and the mitotic spindle. Both modifications can coexist on the same protein on adjacent residues, and lowering polyglycylation levels increases polyglutamylation, and reciprocally. The precise function of polyglycylation is still unclear. Some glutamate residues at the C-terminus are polyglutamylated, resulting in polyglutamate chains on the gamma-carboxyl group. Polyglutamylation plays a key role in microtubule severing by spastin (SPAST). SPAST preferentially recognizes and acts on microtubules decorated with short polyglutamate tails: severing activity by SPAST increases as the number of glutamates per tubulin rises from one to eight, but decreases beyond this glutamylation threshold. In terms of processing, acetylation of alpha chains at Lys-40 is located inside the microtubule lumen. This modification has been correlated with increased microtubule stability, intracellular transport and ciliary assembly. Post-translationally, undergoes a tyrosination/detyrosination cycle, the cyclic removal and re-addition of a C-terminal tyrosine residue by the enzymes tubulin tyrosine carboxypeptidase (MATCAP, VASH1 or VASH2) and tubulin tyrosine ligase (TTL), respectively. Tyrosination promotes microtubule interaction with CAP-Gly microtubule plus-end tracking proteins. Tyrosinated tubulins regulate the initiation of dynein-driven motility. In terms of processing, detyrosination is involved in metaphase plate congression by guiding chromosomes during mitosis. Detyrosination increases microtubules-dependent mechanotransduction in dystrophic cardiac and skeletal muscle. In cardiomyocytes, detyrosinated microtubules are required to resist to contractile compression during contraction.

The protein resides in the cytoplasm. Its subcellular location is the cytoskeleton. It carries out the reaction GTP + H2O = GDP + phosphate + H(+). Tubulin is the major constituent of microtubules, a cylinder consisting of laterally associated linear protofilaments composed of alpha- and beta-tubulin heterodimers. Microtubules grow by the addition of GTP-tubulin dimers to the microtubule end, where a stabilizing cap forms. Below the cap, tubulin dimers are in GDP-bound state, owing to GTPase activity of alpha-tubulin. The protein is Tubulin alpha chain of Torpedo marmorata (Marbled electric ray).